The chain runs to 97 residues: Acylphosphatase (97 aa).

The Acylphosphatase-like domain occupies Thr-9–Glu-95. Active-site residues include Arg-24 and Asn-42.

It belongs to the acylphosphatase family.

The enzyme catalyses an acyl phosphate + H2O = a carboxylate + phosphate + H(+). In Acidovorax sp. (strain JS42), this protein is Acylphosphatase (acyP).